The primary structure comprises 1097 residues: Leukemia inhibitory factor receptor (1097 aa).

An N-terminal signal peptide occupies residues 1–44 (MMDIYVCLKRPSWMVDNKRMRTASNFQWLLSTFILLYLMNQVNS). At 45 to 833 (QKKGAPHDLK…SMYVVTKENS (789 aa)) the chain is on the extracellular side. The 90-residue stretch at 49–138 (APHDLKCVTN…EQNVSLIPDT (90 aa)) folds into the Fibronectin type-III 1 domain. 2 cysteine pairs are disulfide-bonded: cysteine 55/cysteine 65 and cysteine 82/cysteine 90. N-linked (GlcNAc...) asparagine glycosylation is found at asparagine 64, asparagine 85, asparagine 131, asparagine 143, asparagine 191, asparagine 243, and asparagine 303. The cysteines at positions 213 and 270 are disulfide-linked. Fibronectin type-III domains are found at residues 335 to 434 (TPQQ…VYPH), 435 to 534 (TPTS…TEAS), 538 to 629 (GPDT…IPND), 627 to 719 (PNDD…IGYI), and 724 to 833 (PIVA…KENS). A disulfide bond links cysteine 341 and cysteine 351. Residues asparagine 390, asparagine 407, asparagine 426, asparagine 445, asparagine 481, and asparagine 489 are each glycosylated (N-linked (GlcNAc...) asparagine). Cysteine 466 and cysteine 511 form a disulfide bridge. Residues 519-523 (WSKWS) carry the WSXWS motif motif. Residues asparagine 572, asparagine 652, asparagine 663, asparagine 680, asparagine 729, and asparagine 787 are each glycosylated (N-linked (GlcNAc...) asparagine). A helical transmembrane segment spans residues 834-858 (VGLIIAILIPVAVAVIVGVVTSILC). The Cytoplasmic segment spans residues 859–1097 (YRKREWIKET…TNFFQNKPND (239 aa)). The Box 1 motif motif lies at 869–877 (FYPDIPNPE). The residue at position 927 (serine 927) is a Phosphoserine. Residues 983–1005 (PQAKPEEEQENDPVGGAGYKPQM) are disordered. Serine 1044 is modified (phosphoserine). Residues 1066 to 1097 (RQFLIPPKDEDSPKSNGGGWSFTNFFQNKPND) form a disordered region. The span at 1086-1097 (SFTNFFQNKPND) shows a compositional bias: polar residues.

It belongs to the type I cytokine receptor family. Type 2 subfamily. As to quaternary structure, heterodimer composed of LIFR and IL6ST. The heterodimer formed by LIFR and IL6ST interacts with the complex formed by CNTF and CNTFR.

Its subcellular location is the cell membrane. It localises to the secreted. Functionally, signal-transducing molecule. May have a common pathway with IL6ST. The soluble form inhibits the biological activity of LIF by blocking its binding to receptors on target cells. The sequence is that of Leukemia inhibitory factor receptor (LIFR) from Homo sapiens (Human).